The chain runs to 716 residues: 1,4-alpha-glucan branching enzyme GlgB (716 aa).

Asp-394 (nucleophile) is an active-site residue. The active-site Proton donor is the Glu-447.

It belongs to the glycosyl hydrolase 13 family. GlgB subfamily. In terms of assembly, monomer.

It catalyses the reaction Transfers a segment of a (1-&gt;4)-alpha-D-glucan chain to a primary hydroxy group in a similar glucan chain.. Its pathway is glycan biosynthesis; glycogen biosynthesis. Functionally, catalyzes the formation of the alpha-1,6-glucosidic linkages in glycogen by scission of a 1,4-alpha-linked oligosaccharide from growing alpha-1,4-glucan chains and the subsequent attachment of the oligosaccharide to the alpha-1,6 position. The polypeptide is 1,4-alpha-glucan branching enzyme GlgB (Photobacterium profundum (strain SS9)).